A 396-amino-acid polypeptide reads, in one-letter code: MSWSFLTRLLEEIHNHSTFVGKIWLTVLIAFRIALTAVGGESIYYDEQSKFVCNTEQPGCENVCYDAFAPLSHVRFWVFQIILVATPSVMYLGYAIHKIAKMEHGEADKKAARSKPYAMRWKQHRALEETEEDHEEDPMMYPEMELESEKENKEQNQPKPKHDGRRRIREDGLMKIYVLQLLARTVFEVGFLIGQYFLYGFQVHPFYVCSRLPCPHKIDCFISRPTEKTIFLLIMYGVTGLCLLLNIWEMLHLGFGTIRDSLNSKRRELEDPGAYNYPFTWNTPSAPPGYNIAVKPDQIQYTELSNAKIAYKQNKANIAQEQQYGSHEENLPADLETLQREIKMVQERLDLAIQAYSHQNNPHGPREKKAKVGSKAGSNKSSASSKSGDGKNSVWI.

The Cytoplasmic portion of the chain corresponds to 1–22 (MSWSFLTRLLEEIHNHSTFVGK). The chain crosses the membrane as a helical span at residues 23-45 (IWLTVLIAFRIALTAVGGESIYY). Over 46-75 (DEQSKFVCNTEQPGCENVCYDAFAPLSHVR) the chain is Extracellular. Residues 76-95 (FWVFQIILVATPSVMYLGYA) form a helical membrane-spanning segment. The Cytoplasmic portion of the chain corresponds to 96–175 (IHKIAKMEHG…RRIREDGLMK (80 aa)). A disordered region spans residues 145–165 (ELESEKENKEQNQPKPKHDGR). Basic and acidic residues predominate over residues 147 to 156 (ESEKENKEQN). Residues 176 to 198 (IYVLQLLARTVFEVGFLIGQYFL) traverse the membrane as a helical segment. Over 199-228 (YGFQVHPFYVCSRLPCPHKIDCFISRPTEK) the chain is Extracellular. The helical transmembrane segment at 229-248 (TIFLLIMYGVTGLCLLLNIW) threads the bilayer. The Cytoplasmic segment spans residues 249–396 (EMLHLGFGTI…SGDGKNSVWI (148 aa)). Positions 355–396 (AYSHQNNPHGPREKKAKVGSKAGSNKSSASSKSGDGKNSVWI) are disordered. The span at 373 to 396 (GSKAGSNKSSASSKSGDGKNSVWI) shows a compositional bias: low complexity.

This sequence belongs to the connexin family. Gamma-type subfamily. A connexon is composed of a hexamer of connexins. Interacts with CNST.

Its subcellular location is the cell membrane. The protein resides in the cell junction. It is found in the gap junction. Its function is as follows. One gap junction consists of a cluster of closely packed pairs of transmembrane channels, the connexons, through which materials of low MW diffuse from one cell to a neighboring cell. The polypeptide is Gap junction gamma-1 protein (GJC1) (Canis lupus familiaris (Dog)).